Consider the following 407-residue polypeptide: MLESLQPESHLLHDEPDPGESVYECNECKETFSLEQNFVEHKKTHSGEKSPECTGCGEESSQASSLTLHLRSRPRRESYKCGECGKAFSQRGNFLSHQKQHTEERPSESKKTPVPMTTTVRNQRNTGNKPYACKECGKAFNGKSYLKEHEKIHTGEKPFECSQCGRAFSQKQYLIKHQNIHSGKKPFKCNECGKAFSQKENLIIHQRIHTGEKPYECKGCGKAFIQKSSLIRHQRSHTGEKPYTCKECGKAFSGKSNLTEHEKIHIGEKPYKCNECGTIFRQKQYLIKHHNIHTGEKPYECNKCGKAFSRITSLIVHVRIHTGDKPYECKICGKAFCQSSSLTVHMRSHTGEKPYGCNECGKAFSQFSTLALHMRIHTGEKPYQCSECGKAFSQKSHHIRHQRIHIH.

Disordered stretches follow at residues 1-21 (MLES…PGES), 39-72 (VEHK…HLRS), and 96-124 (SHQK…RNQR). The C2H2-type 1 zinc finger occupies 23–45 (YECNECKETFSLEQNFVEHKKTH). Composition is skewed to basic and acidic residues over residues 39–51 (VEHK…EKSP) and 100–111 (QHTEERPSESKK). The C2H2-type 2; degenerate zinc-finger motif lies at 51–73 (PECTGCGEESSQASSLTLHLRSR). The C2H2-type 3 zinc-finger motif lies at 79–101 (YKCGECGKAFSQRGNFLSHQKQH). Over residues 115 to 124 (PMTTTVRNQR) the composition is skewed to polar residues. 10 C2H2-type zinc fingers span residues 131-153 (YACK…EKIH), 159-181 (FECS…QNIH), 187-209 (FKCN…QRIH), 215-237 (YECK…QRSH), 243-265 (YTCK…EKIH), 271-293 (YKCN…HNIH), 299-321 (YECN…VRIH), 327-349 (YECK…MRSH), 355-377 (YGCN…MRIH), and 383-405 (YQCS…QRIH).

This sequence belongs to the krueppel C2H2-type zinc-finger protein family. Binds DNA. Interacts with GATA4. In terms of tissue distribution, predominantly present in heart. Outside the heart, it is detected in embryonic and postnatal vascular smooth muscle cells and in epithelial cells of the lung, gut and kidney at sites of epithelial morphogenesis and in the spinal cord (at protein level).

The protein resides in the nucleus. Transcription factor that acts as a cardiac regulator and an effector of alpha1-adrenergic signaling. Binds to PE response elements (PERE) present in the promoter of genes such as ANF/NPPA and acts as a direct transcriptional activator of NPPA. Also acts as a cofactor with GATA4, a key cardiac regulator. This Mus musculus (Mouse) protein is Zinc finger protein 260 (Znf260).